The primary structure comprises 274 residues: Large ribosomal subunit protein uL2c (274 aa).

Disordered regions lie at residues 1-22 and 225-254; these read MAIHLYKTSTPSTRNGAVDSQV and PVDHPHGGGEGRAPIGRKKPVTPWGYPALG.

The protein belongs to the universal ribosomal protein uL2 family. Part of the 50S ribosomal subunit.

It is found in the plastid. It localises to the chloroplast. The chain is Large ribosomal subunit protein uL2c (rpl2) from Sinapis alba (White mustard).